Reading from the N-terminus, the 179-residue chain is Dynein light chain Tctex-type 5 (179 aa).

The protein belongs to the dynein light chain Tctex-type family. As to quaternary structure, interacts with ZMYND10.

The chain is Dynein light chain Tctex-type 5 (DYNLT5) from Homo sapiens (Human).